The sequence spans 71 residues: Exodeoxyribonuclease 7 small subunit (71 aa).

The protein belongs to the XseB family. As to quaternary structure, heterooligomer composed of large and small subunits.

It localises to the cytoplasm. The enzyme catalyses Exonucleolytic cleavage in either 5'- to 3'- or 3'- to 5'-direction to yield nucleoside 5'-phosphates.. Its function is as follows. Bidirectionally degrades single-stranded DNA into large acid-insoluble oligonucleotides, which are then degraded further into small acid-soluble oligonucleotides. The protein is Exodeoxyribonuclease 7 small subunit of Streptococcus thermophilus (strain ATCC BAA-250 / LMG 18311).